The following is a 370-amino-acid chain: Arginine kinase (370 aa).

In terms of domain architecture, Phosphagen kinase N-terminal spans 6–89 (QKKYPAKDDF…FDPVIEEYHN (84 aa)). Positions 115–358 (YVISSRVRTG…KVLIEMEKKL (244 aa)) constitute a Phosphagen kinase C-terminal domain. Residues 118 to 122 (SSRVR) and histidine 181 each bind ATP. Residue glutamate 222 participates in substrate binding. Residue arginine 226 participates in ATP binding. Substrate is bound at residue cysteine 274. ATP is bound by residues 283–287 (RCSVH) and 311–316 (RGTSGE). Glutamate 316 contributes to the substrate binding site.

The protein belongs to the ATP:guanido phosphotransferase family. In terms of assembly, homodimer. The N-terminus is blocked.

The enzyme catalyses L-arginine + ATP = N(omega)-phospho-L-arginine + ADP + H(+). In Stichopus japonicus (Sea cucumber), this protein is Arginine kinase (AK).